Here is a 274-residue protein sequence, read N- to C-terminus: Large ribosomal subunit protein uL2 (274 aa).

Residues 223 to 274 are disordered; it reads VAMNPVDHPHGGGEGRTSGGRHPVSPWGMPTKGFKTRKNKSTDKYIVRRRNK.

It belongs to the universal ribosomal protein uL2 family. Part of the 50S ribosomal subunit. Forms a bridge to the 30S subunit in the 70S ribosome.

One of the primary rRNA binding proteins. Required for association of the 30S and 50S subunits to form the 70S ribosome, for tRNA binding and peptide bond formation. It has been suggested to have peptidyltransferase activity; this is somewhat controversial. Makes several contacts with the 16S rRNA in the 70S ribosome. The sequence is that of Large ribosomal subunit protein uL2 from Aliivibrio fischeri (strain ATCC 700601 / ES114) (Vibrio fischeri).